The sequence spans 689 residues: Protein asunder (689 aa).

Positions asparagine 521 to threonine 550 form a coiled coil. Disordered regions lie at residues glycine 578–arginine 619 and proline 662–serine 689. A compositionally biased stretch (low complexity) spans serine 599–lysine 614. The short motif at leucine 613 to arginine 619 is the Nuclear localization signal (NLS) element.

This sequence belongs to the Integrator subunit 13 family. As to quaternary structure, belongs to the multiprotein complex Integrator, at least composed of IntS1, IntS2, IntS3, IntS4, omd/IntS5, IntS6, defl/IntS7, IntS8, IntS9, IntS10, IntS11, IntS12, asun/IntS13, IntS14 and IntS15. The core complex associates with protein phosphatase 2A subunits mts/PP2A and Pp2A-29B, to form the Integrator-PP2A (INTAC) complex. Phosphorylated.

Its subcellular location is the nucleus. It is found in the cytoplasm. The protein localises to the perinuclear region. Its function is as follows. Component of the integrator complex, a multiprotein complex that terminates RNA polymerase II (Pol II) transcription in the promoter-proximal region of genes. The integrator complex provides a quality checkpoint during transcription elongation by driving premature transcription termination of transcripts that are unfavorably configured for transcriptional elongation: the complex terminates transcription by (1) catalyzing dephosphorylation of the C-terminal domain (CTD) of Pol II subunit Polr2A/Rbp1 and Spt5, and (2) degrading the exiting nascent RNA transcript via endonuclease activity. The integrator complex is also involved in the 3'-end processing of the U7 snRNA, and also the spliceosomal snRNAs U1, U2, U4 and U5. This Drosophila yakuba (Fruit fly) protein is Protein asunder (asun).